A 243-amino-acid chain; its full sequence is Terpene cyclase penB (243 aa).

A run of 3 helical transmembrane segments spans residues 19–39, 48–68, and 78–98; these read IANI…VGMI, YGMA…YSLI, and GVFI…IKFA. N-linked (GlcNAc...) asparagine glycosylation occurs at Asn-111. 4 helical membrane-spanning segments follow: residues 112-132, 137-157, 172-194, and 205-225; these read LSLI…ALAA, SLAY…GGLC, LWLS…WMYW, and LVLW…LCYW.

The protein belongs to the paxB family.

It is found in the membrane. It functions in the pathway secondary metabolite biosynthesis. Its function is as follows. Terpene cyclase; part of the gene cluster that mediates the biosynthesis of the indole diterpenes penitrems. The geranylgeranyl diphosphate (GGPP) synthase penG catalyzes the first step in penitrem biosynthesis via conversion of farnesyl pyrophosphate and isopentyl pyrophosphate into geranylgeranyl pyrophosphate (GGPP). Condensation of indole-3-glycerol phosphate with GGPP by the prenyl transferase penC then forms 3-geranylgeranylindole (3-GGI). Epoxidation by the FAD-dependent monooxygenase penM leads to a epoxidized-GGI that is substrate of the terpene cyclase penB for cyclization to yield paspaline. Paspaline is subsequently converted to 13-desoxypaxilline by the cytochrome P450 monooxygenase penP, the latter being then converted to paxilline by the cytochrome P450 monooxygenase penQ. Paxilline is converted to beta-paxitriol via C-10 ketoreduction by the short-chain dehydrogenase PC-15 which can be monoprenylated at the C-20 by the indole diterpene prenyltransferase penD. A two-step elimination (acetylation and elimination) process performed by the O-acetyltransferase PC-16 and the P.simplicissimum ptmI-ortholog not yet identified in P.crustosum, leads to the production of the prenylated form of penijanthine. The FAD-linked oxidoreductase ptmO then converts the prenylated form of penijanthine into PC-M5 which is in turn transformed into PC-M4 by the aromatic dimethylallyltransferase PC-22. A series of oxidation steps involving 4 cytochrome P450 monooxygenases (PC-21, PC-05, PC-23, PC-20) and a FAD-dependent monooxygenase (PC-14) are required for the transformation of PC-M4 to penitrems A and E. Synthesis of these final products is proposed to proceed via penitrems D and C (PC-21, PC-05, PC-14) and penitrems B and F (PC-21, PC-05, PC-14, PC-23). This is Terpene cyclase penB (penB) from Penicillium crustosum (Blue mold fungus).